Consider the following 143-residue polypeptide: Peptide methionine sulfoxide reductase MsrB (143 aa).

In terms of domain architecture, MsrB spans 16–139 (DAELRRRLTP…NSAALNFESR (124 aa)). Residues Cys-55, Cys-58, Cys-104, and Cys-107 each coordinate Zn(2+). Cys-128 functions as the Nucleophile in the catalytic mechanism.

The protein belongs to the MsrB Met sulfoxide reductase family. Zn(2+) is required as a cofactor.

The enzyme catalyses L-methionyl-[protein] + [thioredoxin]-disulfide + H2O = L-methionyl-(R)-S-oxide-[protein] + [thioredoxin]-dithiol. This chain is Peptide methionine sulfoxide reductase MsrB, found in Burkholderia lata (strain ATCC 17760 / DSM 23089 / LMG 22485 / NCIMB 9086 / R18194 / 383).